Reading from the N-terminus, the 71-residue chain is V-type proton ATPase subunit e (71 aa).

Topologically, residues 1–2 (MS) are lumenal. A helical transmembrane segment spans residues 3–23 (FFHVVFVAFVIAAIGAAGWFV). The Cytoplasmic segment spans residues 24–35 (TPKGKNQTLLRT). A helical transmembrane segment spans residues 36–56 (SLLLTLTCCYLMWAITYLCQL). The Lumenal portion of the chain corresponds to 57–71 (HPLITPRRSDLRMEY).

The protein belongs to the V-ATPase e1/e2 subunit family. In terms of assembly, V-ATPase is a heteromultimeric enzyme composed of a peripheral catalytic V1 complex (components A to H) attached to an integral membrane V0 proton pore complex (components: a, c, c', c'', d, e, f and VOA1).

Its subcellular location is the vacuole membrane. In terms of biological role, subunit of the V0 complex of vacuolar(H+)-ATPase (V-ATPase), a multisubunit enzyme composed of a peripheral complex (V1) that hydrolyzes ATP and a membrane integral complex (V0) that translocates protons. V-ATPase is responsible for acidifying and maintaining the pH of intracellular compartments. In Cryptococcus neoformans var. neoformans serotype D (strain JEC21 / ATCC MYA-565) (Filobasidiella neoformans), this protein is V-type proton ATPase subunit e (VMA9).